The following is a 152-amino-acid chain: Probable prefoldin subunit 5 (152 aa).

Belongs to the prefoldin subunit alpha family. Heterohexamer of two PFD-alpha type and four PFD-beta type subunits.

Binds specifically to cytosolic chaperonin (c-CPN) and transfers target proteins to it. Binds to nascent polypeptide chain and promotes folding in an environment in which there are many competing pathways for nonnative proteins. This is Probable prefoldin subunit 5 (pfd-5) from Caenorhabditis elegans.